A 488-amino-acid chain; its full sequence is Signal recognition particle receptor FtsY (488 aa).

Positions 14-82 (DTAPEDVSKP…AVPDDAVHGG (69 aa)) are disordered. Positions 32 to 67 (VGTSSTGSPVGTGAAMPAAQDAPSPAAPHAIATPDD) are enriched in low complexity. GTP is bound by residues 287–294 (GVNGVGKT), 369–373 (DTAGR), and 433–436 (TKLD).

This sequence belongs to the GTP-binding SRP family. FtsY subfamily. In terms of assembly, part of the signal recognition particle protein translocation system, which is composed of SRP and FtsY. SRP is a ribonucleoprotein composed of Ffh and a 4.5S RNA molecule.

The protein resides in the cell inner membrane. Its subcellular location is the cytoplasm. It carries out the reaction GTP + H2O = GDP + phosphate + H(+). In terms of biological role, involved in targeting and insertion of nascent membrane proteins into the cytoplasmic membrane. Acts as a receptor for the complex formed by the signal recognition particle (SRP) and the ribosome-nascent chain (RNC). Interaction with SRP-RNC leads to the transfer of the RNC complex to the Sec translocase for insertion into the membrane, the hydrolysis of GTP by both Ffh and FtsY, and the dissociation of the SRP-FtsY complex into the individual components. The sequence is that of Signal recognition particle receptor FtsY from Nitratidesulfovibrio vulgaris (strain ATCC 29579 / DSM 644 / CCUG 34227 / NCIMB 8303 / VKM B-1760 / Hildenborough) (Desulfovibrio vulgaris).